A 276-amino-acid chain; its full sequence is Dermonecrotic toxin LsaSicTox-alphaIB2iii (276 aa).

His-5 is a catalytic residue. 2 residues coordinate Mg(2+): Glu-25 and Asp-27. The active-site Nucleophile is His-41. Cystine bridges form between Cys-45–Cys-51 and Cys-47–Cys-190. Asp-85 contacts Mg(2+). N-linked (GlcNAc...) asparagine glycans are attached at residues Asn-129 and Asn-253.

Belongs to the arthropod phospholipase D family. Class II subfamily. The cofactor is Mg(2+). Expressed by the venom gland.

It is found in the secreted. It carries out the reaction an N-(acyl)-sphingosylphosphocholine = an N-(acyl)-sphingosyl-1,3-cyclic phosphate + choline. The catalysed reaction is an N-(acyl)-sphingosylphosphoethanolamine = an N-(acyl)-sphingosyl-1,3-cyclic phosphate + ethanolamine. It catalyses the reaction a 1-acyl-sn-glycero-3-phosphocholine = a 1-acyl-sn-glycero-2,3-cyclic phosphate + choline. The enzyme catalyses a 1-acyl-sn-glycero-3-phosphoethanolamine = a 1-acyl-sn-glycero-2,3-cyclic phosphate + ethanolamine. Its function is as follows. Dermonecrotic toxins cleave the phosphodiester linkage between the phosphate and headgroup of certain phospholipids (sphingolipid and lysolipid substrates), forming an alcohol (often choline) and a cyclic phosphate. This toxin acts on sphingomyelin (SM). It may also act on ceramide phosphoethanolamine (CPE), lysophosphatidylcholine (LPC) and lysophosphatidylethanolamine (LPE), but not on lysophosphatidylserine (LPS), and lysophosphatidylglycerol (LPG). It acts by transphosphatidylation, releasing exclusively cyclic phosphate products as second products. Induces dermonecrosis, hemolysis, increased vascular permeability, edema, inflammatory response, and platelet aggregation. This is Dermonecrotic toxin LsaSicTox-alphaIB2iii from Loxosceles sabina (Tucson recluse spider).